Consider the following 100-residue polypeptide: Toxin ParE3 (100 aa).

This sequence belongs to the RelE toxin family.

Functionally, toxic component of a type II toxin-antitoxin (TA) system. Its toxic effect is neutralized by coexpression with cognate antitoxin ParD3 but no other ParD or RelB antitoxin. This chain is Toxin ParE3 (parE3), found in Caulobacter vibrioides (strain ATCC 19089 / CIP 103742 / CB 15) (Caulobacter crescentus).